A 240-amino-acid chain; its full sequence is Triosephosphate isomerase (240 aa).

A substrate-binding site is contributed by 6-8 (NLK). The Electrophile role is filled by His-88. Glu-157 acts as the Proton acceptor in catalysis. Substrate is bound by residues Gly-163 and Ser-193.

It belongs to the triosephosphate isomerase family. In terms of assembly, homodimer.

The protein localises to the cytoplasm. It catalyses the reaction D-glyceraldehyde 3-phosphate = dihydroxyacetone phosphate. It participates in carbohydrate biosynthesis; gluconeogenesis. Its pathway is carbohydrate degradation; glycolysis; D-glyceraldehyde 3-phosphate from glycerone phosphate: step 1/1. In terms of biological role, involved in the gluconeogenesis. Catalyzes stereospecifically the conversion of dihydroxyacetone phosphate (DHAP) to D-glyceraldehyde-3-phosphate (G3P). This Sulfurimonas denitrificans (strain ATCC 33889 / DSM 1251) (Thiomicrospira denitrificans (strain ATCC 33889 / DSM 1251)) protein is Triosephosphate isomerase.